The sequence spans 243 residues: 1-(5-phosphoribosyl)-5-[(5-phosphoribosylamino)methylideneamino] imidazole-4-carboxamide isomerase (243 aa).

Catalysis depends on aspartate 8, which acts as the Proton acceptor. Aspartate 129 (proton donor) is an active-site residue.

The protein belongs to the HisA/HisF family.

It localises to the cytoplasm. The enzyme catalyses 1-(5-phospho-beta-D-ribosyl)-5-[(5-phospho-beta-D-ribosylamino)methylideneamino]imidazole-4-carboxamide = 5-[(5-phospho-1-deoxy-D-ribulos-1-ylimino)methylamino]-1-(5-phospho-beta-D-ribosyl)imidazole-4-carboxamide. Its pathway is amino-acid biosynthesis; L-histidine biosynthesis; L-histidine from 5-phospho-alpha-D-ribose 1-diphosphate: step 4/9. This chain is 1-(5-phosphoribosyl)-5-[(5-phosphoribosylamino)methylideneamino] imidazole-4-carboxamide isomerase, found in Carboxydothermus hydrogenoformans (strain ATCC BAA-161 / DSM 6008 / Z-2901).